A 250-amino-acid polypeptide reads, in one-letter code: Prophage antitermination protein Q homolog QuuQ (250 aa).

It belongs to the phage antitermination Q type 2 family.

In terms of biological role, positively regulate expression of some phage genes. Bacterial host RNA polymerase modified by antitermination proteins transcribes through termination sites that otherwise prevent expression of the regulated genes. The protein is Prophage antitermination protein Q homolog QuuQ (quuQ) of Escherichia coli (strain K12).